The sequence spans 1201 residues: uncharacterized protein (1201 aa).

The chain crosses the membrane as a helical span at residues Ile140 to Pro160. Coiled-coil stretches lie at residues Gln420–Asn459 and Ala536–Met574.

It is found in the cell membrane. This is an uncharacterized protein from Bacillus subtilis (strain 168).